The primary structure comprises 211 residues: Probable nicotinate-nucleotide adenylyltransferase (211 aa).

This sequence belongs to the NadD family.

It carries out the reaction nicotinate beta-D-ribonucleotide + ATP + H(+) = deamido-NAD(+) + diphosphate. Its pathway is cofactor biosynthesis; NAD(+) biosynthesis; deamido-NAD(+) from nicotinate D-ribonucleotide: step 1/1. Functionally, catalyzes the reversible adenylation of nicotinate mononucleotide (NaMN) to nicotinic acid adenine dinucleotide (NaAD). This chain is Probable nicotinate-nucleotide adenylyltransferase, found in Legionella pneumophila (strain Corby).